A 600-amino-acid chain; its full sequence is Methionine--tRNA ligase (600 aa).

The short motif at 11–21 is the 'HIGH' region element; that stretch reads PYANGPRHIGH. Residues C143, C146, C156, and C159 each contribute to the Zn(2+) site. The 'KMSKS' region signature appears at 350–354; it reads QFSSS. S353 contributes to the ATP binding site.

This sequence belongs to the class-I aminoacyl-tRNA synthetase family. MetG type 1 subfamily. As to quaternary structure, monomer. Requires Zn(2+) as cofactor.

It localises to the cytoplasm. The catalysed reaction is tRNA(Met) + L-methionine + ATP = L-methionyl-tRNA(Met) + AMP + diphosphate. Functionally, is required not only for elongation of protein synthesis but also for the initiation of all mRNA translation through initiator tRNA(fMet) aminoacylation. This chain is Methionine--tRNA ligase, found in Kineococcus radiotolerans (strain ATCC BAA-149 / DSM 14245 / SRS30216).